Consider the following 39-residue polypeptide: Photosystem II reaction center protein X (39 aa).

The helical transmembrane segment at 10 to 30 threads the bilayer; the sequence is WSLVLGAAIVLIPATIGLIFI.

This sequence belongs to the PsbX family. Type 1 subfamily. As to quaternary structure, PSII is composed of 1 copy each of membrane proteins PsbA, PsbB, PsbC, PsbD, PsbE, PsbF, PsbH, PsbI, PsbJ, PsbK, PsbL, PsbM, PsbT, PsbX, PsbY, PsbZ, Psb30/Ycf12, peripheral proteins PsbO, CyanoQ (PsbQ), PsbU, PsbV and a large number of cofactors. It forms dimeric complexes.

Its subcellular location is the cellular thylakoid membrane. Involved in the binding and/or turnover of quinones at the Q(B) site of photosystem II (PSII). PSII is a light-driven water plastoquinone oxidoreductase, using light energy to abstract electrons from H(2)O, generating a proton gradient subsequently used for ATP formation. This Microcystis aeruginosa (strain NIES-843 / IAM M-2473) protein is Photosystem II reaction center protein X.